Reading from the N-terminus, the 119-residue chain is Circadian clock oscillator protein KaiB (119 aa).

Belongs to the KaiB family. In terms of assembly, the KaiABC complex composition changes during the circadian cycle to control KaiC phosphorylation. Complexes KaiC(6), KaiA(2-4):KaiC(6), KaiB(6):KaiC(6) and KaiC(6):KaiB(6):KaiA(12) are among the most important forms, many form cooperatively. Undergoes a major conformational rearrangment; in the free state forms homotetramers as a dimer of dimers. When bound to the CI domain of KaiC switches to a monomeric thioredoxin-fold (KaiB(fs)). KaiB(fs) binds CikA, leading it to dephosphorylate phospho-RpaA.

Key component of the KaiABC oscillator complex, which constitutes the main circadian regulator in cyanobacteria. Complex composition changes during the circadian cycle to control KaiC phosphorylation. KaiA stimulates KaiC autophosphorylation, while KaiB sequesters KaiA, leading to KaiC autodephosphorylation. Phospho-Ser-431 KaiC accumulation triggers binding of KaiB to form the KaiB(6):KaiC(6) complex, leading to changes in output regulators CikA and SasA. KaiB switches to a thioredoxin-like fold (KaiB(fs)) when bound to KaiC. KaiB(6):KaiC(6) formation exposes a site for KaiA binding that sequesters KaiA from KaiC, making the KaiC(6):KaiB(6):KaiA(12) complex that results in KaiC autodephosphorylation. In terms of biological role, a metamorphic protein which reversibly switches between an inactive tetrameric fold and a rare, thioredoxin-like monomeric fold (KaiB(fs)). KaiB(fs) binds phospho-KaiC, KaiA and CikA. KaiA and CikA compete for binding to KaiB(fs), and KaiB(fs) and SasA compete for binding to KaiC, thus the clock oscillator and output signal pathway are tightly coupled. This is Circadian clock oscillator protein KaiB from Synechococcus sp. (strain CC9311).